A 105-amino-acid polypeptide reads, in one-letter code: Spermatogenesis-associated protein 8 (105 aa).

In terms of tissue distribution, expressed at high levels in adult testis, at moderate levels in sperm and at low levels in fetal testis. Not detected in other tissues.

The sequence is that of Spermatogenesis-associated protein 8 (SPATA8) from Homo sapiens (Human).